A 1254-amino-acid chain; its full sequence is SUN domain-containing ossification factor (1254 aa).

Positions methionine 1–cysteine 29 are cleaved as a signal peptide. 3 disordered regions span residues lysine 58–lysine 88, glutamate 118–threonine 270, and glutamate 282–glutamine 304. The segment covering valine 130–serine 145 has biased composition (low complexity). Residues glutamate 165–glutamate 175 are compositionally biased toward acidic residues. Asparagine 202 and asparagine 236 each carry an N-linked (GlcNAc...) asparagine glycan. A compositionally biased stretch (basic and acidic residues) spans leucine 241–aspartate 253. Positions glutamate 284 to methionine 453 constitute an SUN domain. The span at serine 288–serine 297 shows a compositional bias: polar residues. Asparagine 524 carries N-linked (GlcNAc...) asparagine glycosylation. Disordered regions lie at residues asparagine 530–glutamate 553, glutamate 583–serine 605, and histidine 759–glutamate 788. Over residues proline 540–glutamate 553 the composition is skewed to low complexity. A coiled-coil region spans residues asparagine 909–aspartate 1009. Residues asparagine 928 and asparagine 955 are each glycosylated (N-linked (GlcNAc...) asparagine). The chain crosses the membrane as a helical span at residues glutamine 1011–glutamine 1031. Phosphoserine is present on serine 1081. A disordered region spans residues glutamate 1152 to glutamine 1172. Residues serine 1163–glutamine 1172 show a composition bias toward low complexity.

O-glycosylated. O-mannosylated by POMT1 and POMT2 and elongated by POMGNT1. In terms of processing, N-glycosylated. Highly expressed in pancreas and testis and to a lower extent in prostate, ovary, heart, thymus, small intestine and spleen.

The protein resides in the rough endoplasmic reticulum membrane. Its function is as follows. Required for bone modeling during late embryogenesis. Regulates type I collagen synthesis in osteoblasts during their postnatal maturation. The sequence is that of SUN domain-containing ossification factor (SUCO) from Homo sapiens (Human).